The following is a 1085-amino-acid chain: Solute carrier family 12 member 4 (1085 aa).

The Cytoplasmic segment spans residues methionine 1–glycine 119. 5 positions are modified to phosphoserine: serine 24, serine 47, serine 51, serine 81, and serine 88. The discontinuously helical transmembrane segment at threonine 120–leucine 141 threads the bilayer. Residues asparagine 131 and isoleucine 132 each coordinate K(+). Over threonine 142 to glycine 149 the chain is Extracellular. Residues valine 150 to serine 172 traverse the membrane as a helical segment. Topologically, residues alanine 173 to glutamate 196 are cytoplasmic. Residues phenylalanine 197–leucine 225 traverse the membrane as a helical segment. Residue tyrosine 216 coordinates K(+). At threonine 226 to leucine 248 the chain is on the extracellular side. Asparagine 245 carries an N-linked (GlcNAc...) asparagine glycan. 2 helical membrane passes run asparagine 249 to lysine 271 and tyrosine 272 to lysine 297. Residues serine 298–serine 419 are Extracellular-facing. Cysteine 308 and cysteine 323 are oxidised to a cystine. N-linked (GlcNAc...) asparagine glycosylation is found at asparagine 312, asparagine 331, asparagine 347, and asparagine 361. Cysteines 343 and 353 form a disulfide. The chain crosses the membrane as a helical span at residues phenylalanine 420–arginine 440. Proline 429 and threonine 432 together coordinate K(+). Chloride-binding residues include glycine 433, isoleucine 434, and methionine 435. Residues serine 441–serine 450 are Cytoplasmic-facing. Residues isoleucine 451–phenylalanine 473 form a helical membrane-spanning segment. Residues glycine 474 to proline 504 lie on the Extracellular side of the membrane. Residues tryptophan 505–glutamine 531 form a helical membrane-spanning segment. The Cytoplasmic portion of the chain corresponds to alanine 532–proline 554. 2 helical membrane-spanning segments follow: residues threonine 555–aspartate 575 and methionine 576–valine 598. Tyrosine 589 contacts chloride. The Cytoplasmic segment spans residues glutamine 599–lysine 612. 2 consecutive transmembrane segments (helical) span residues tyrosine 613–tryptophan 635 and tyrosine 636–tyrosine 651. At isoleucine 652–serine 1085 the chain is on the cytoplasmic side. Residues isoleucine 665–glutamate 681 form a scissor helix region. Residues leucine 697, lysine 699, lysine 707, tyrosine 708, and valine 730 each contribute to the ATP site. A Phosphoserine modification is found at serine 734. ATP-binding residues include glycine 794, tryptophan 795, and tyrosine 797. Residues serine 916 and serine 967 each carry the phosphoserine modification. Threonine 983 is modified (phosphothreonine). Serine 1050 is modified (phosphoserine).

This sequence belongs to the SLC12A transporter family. K/Cl co-transporter subfamily. Homodimer; adopts a domain-swap conformation at the scissor helices connecting the transmembrane domain and C-terminal domain. Heterodimer with other K-Cl cotransporters. In terms of processing, phosphorylated, phosphorylation may regulate transporter activity. In terms of tissue distribution, ubiquitous. Levels are much higher in erythrocytes from patients with Hb SC and Hb SS compared to normal AA erythrocytes. This may contribute to red blood cell dehydration and to the manifestation of sickle cell disease by increasing the intracellular concentration of HbS. As to expression, not detected in circulating reticulocytes.

It localises to the cell membrane. It catalyses the reaction K(+)(in) + chloride(in) = K(+)(out) + chloride(out). Its activity is regulated as follows. Inhibited by WNK3. Its function is as follows. Mediates electroneutral potassium-chloride cotransport when activated by cell swelling. May contribute to cell volume homeostasis in single cells. May be involved in the regulation of basolateral Cl(-) exit in NaCl absorbing epithelia. In terms of biological role, no transporter activity. The chain is Solute carrier family 12 member 4 from Homo sapiens (Human).